The sequence spans 205 residues: FAS-associated death domain protein (205 aa).

The region spanning 3-81 (PFLVLLHSLS…RHDLLQRLDD (79 aa)) is the DED domain. A Death domain is found at 97-181 (LQVAFDIVCD…LVADLVEEAQ (85 aa)). The disordered stretch occupies residues 181-205 (QESVSKSENMSPVLRDSTVSSSETP). Residue serine 191 is modified to Phosphoserine.

In terms of assembly, can self-associate. Component of the AIM2 PANoptosome complex, a multiprotein complex that drives inflammatory cell death (PANoptosis). Component of the death-induced signaling complex (DISC) composed of cell surface receptor FAS/CD95 or TNFRSF1A, adapter protein FADD and the CASP8 protease; recruitment of CASP8 to the complex is required for processing of CASP8 into the p18 and p10 subunits. Interacts (via death domain) with FAS (via death domain). Interacts directly (via DED domain) with NOL3 (via CARD domain); inhibits death-inducing signaling complex (DISC) assembly by inhibiting the increase in FAS-FADD binding induced by FAS activation. Interacts with CFLAR, PEA15 and MBD4. When phosphorylated, part of a complex containing HIPK3 and FAS. May interact with MAVS/IPS1. Interacts with MOCV v-CFLAR protein and PIDD1. Interacts with RIPK1 and TRADD. Interacts with stimulated TNFRSF10B. Interacts with DDX24.

It localises to the cytoplasm. Functionally, apoptotic adapter molecule that recruits caspases CASP8 or CASP10 to the activated FAS/CD95 or TNFRSF1A/TNFR-1 receptors. The resulting aggregate called the death-inducing signaling complex (DISC) performs CASP8 proteolytic activation. Active CASP8 initiates the subsequent cascade of caspases mediating apoptosis. Involved in interferon-mediated antiviral immune response, playing a role in the positive regulation of interferon signaling. In Mus musculus (Mouse), this protein is FAS-associated death domain protein.